Reading from the N-terminus, the 382-residue chain is Galactokinase (382 aa).

Substrate is bound at residue 34–37 (EHTD). 124 to 130 (GAGLSSS) provides a ligand contact to ATP. Mg(2+) contacts are provided by Ser130 and Glu162. Asp174 functions as the Proton acceptor in the catalytic mechanism. Substrate is bound at residue Tyr223.

It belongs to the GHMP kinase family. GalK subfamily.

It is found in the cytoplasm. It catalyses the reaction alpha-D-galactose + ATP = alpha-D-galactose 1-phosphate + ADP + H(+). The protein operates within carbohydrate metabolism; galactose metabolism. Its function is as follows. Catalyzes the transfer of the gamma-phosphate of ATP to D-galactose to form alpha-D-galactose-1-phosphate (Gal-1-P). This Shigella dysenteriae serotype 1 (strain Sd197) protein is Galactokinase.